The primary structure comprises 333 residues: MGITVIGSLNYDLDTFTDRLPNAGETFRANHFETHAGGKGLNQAAAIGKLKNPSSRYSVRMIGNVGNDTFGKQLKDTLSDCGVDITHVGTYEGINTGTATILIEEKAGGQNRILIVEGANSKTIYDPKQLCEIFPEGKEEEEYVVFQHEIPDPLSIIKWIHANRPNFQIVYNPSPFKAMPKKDWELVDLLVVNEIEGLQIVESVFDNELVEEIREKIKDDFLGEYRKICELLYEKLMNRKKRGIVVMTLGSRGVLFCSHESPEVQFLPAIQNVSVVDTTGAGDTFLGGLVTQLYQGETLSTAIKFSTLASSLTIQRKGAAESMPLYKDVQKDA.

Residues 10–12, 38–42, and Glu-149 each bind substrate; these read NYD and GKGLN. ATP-binding positions include Asn-193 and 248–253; that span reads TLGSRG. Positions 277 and 279 each coordinate K(+). Residue 282-283 participates in ATP binding; it reads GD. Asp-283 serves as a coordination point for substrate. The active-site Proton acceptor is Asp-283. K(+) contacts are provided by Thr-313, Arg-316, Gly-318, and Ser-322.

The protein belongs to the carbohydrate kinase PfkB family. Ribokinase subfamily. Homodimer. The cofactor is Mg(2+).

It localises to the cytoplasm. The protein resides in the nucleus. It catalyses the reaction D-ribose + ATP = D-ribose 5-phosphate + ADP + H(+). It functions in the pathway carbohydrate metabolism; D-ribose degradation; D-ribose 5-phosphate from beta-D-ribopyranose: step 2/2. Activated by a monovalent cation that binds near, but not in, the active site. The most likely occupant of the site in vivo is potassium. Ion binding induces a conformational change that may alter substrate affinity. In terms of biological role, catalyzes the phosphorylation of ribose at O-5 in a reaction requiring ATP and magnesium. The resulting D-ribose-5-phosphate can then be used either for sythesis of nucleotides, histidine, and tryptophan, or as a component of the pentose phosphate pathway. This Saccharomyces cerevisiae (strain ATCC 204508 / S288c) (Baker's yeast) protein is Ribokinase.